We begin with the raw amino-acid sequence, 471 residues long: Putative multidrug resistance protein MdtD (471 aa).

Topologically, residues 1 to 11 are periplasmic; that stretch reads MTDLPDSTRWQ. Residues 12-32 form a helical membrane-spanning segment; that stretch reads LWIVAFGFFMQSLDTTIVNTA. At 33–48 the chain is on the cytoplasmic side; that stretch reads LPSMAQSLGESPLHMH. A helical membrane pass occupies residues 49 to 69; that stretch reads MVIVSYVLTVAVMLPASGWLA. Over 70–76 the chain is Periplasmic; sequence DKVGVRN. A helical membrane pass occupies residues 77 to 97; sequence IFFTAIVLFTLGSLFCALSGT. Residues 98–101 are Cytoplasmic-facing; that stretch reads LNEL. Residues 102-124 form a helical membrane-spanning segment; it reads LLARALQGVGGAMMVPVGRLTVM. The Periplasmic portion of the chain corresponds to 125–137; the sequence is KIVPREQYMAAMT. The chain crosses the membrane as a helical span at residues 138–158; it reads FVTLPGQIGPLLGPALGGLLV. The Cytoplasmic portion of the chain corresponds to 159 to 164; sequence EYASWH. A helical membrane pass occupies residues 165 to 185; the sequence is WIFLINIPVGIIGAIATLMLM. At 186–196 the chain is on the periplasmic side; it reads PNYTMQTRRFD. Residues 197 to 217 traverse the membrane as a helical segment; that stretch reads LSGFLLLAVGMAVLTLALDGS. Over 218–224 the chain is Cytoplasmic; the sequence is KGTGFSP. A helical membrane pass occupies residues 225–245; that stretch reads LAIAGLVAVGVVALVLYLLHA. Over 246-262 the chain is Periplasmic; it reads QNNNRALFSLKLFRTRT. A helical transmembrane segment spans residues 263–283; it reads FSLGLAGSFAGRIGSGMLPFM. The Cytoplasmic portion of the chain corresponds to 284 to 285; it reads TP. Residues 286–306 traverse the membrane as a helical segment; it reads VFLQIGLGFSPFHAGLMMIPM. Residues 307–341 are Periplasmic-facing; it reads VLGSMGMKRIVVQVVNRFGYRWVLVATTLGLSLVT. The helical transmembrane segment at 342 to 362 threads the bilayer; the sequence is LLFMTTALLGWYYVLPFVLFL. Topologically, residues 363–395 are cytoplasmic; sequence QGMVNSTRFSSMNTLTLKDLPDNLASSGNSLLS. Residues 396 to 416 form a helical membrane-spanning segment; sequence MIMQLSMSIGVTIAGLLLGLF. At 417–430 the chain is on the periplasmic side; sequence GSQHVSVDSGTTQT. A helical membrane pass occupies residues 431-451; the sequence is VFMYTWLSMAFIIALPAFVFA. The Cytoplasmic portion of the chain corresponds to 452-471; sequence RVPSDTHQNVAISRRKRSAQ.

Belongs to the major facilitator superfamily. TCR/Tet family.

Its subcellular location is the cell inner membrane. This Escherichia coli O81 (strain ED1a) protein is Putative multidrug resistance protein MdtD.